We begin with the raw amino-acid sequence, 570 residues long: Sulfite reductase [NADPH] hemoprotein beta-component (570 aa).

4 residues coordinate [4Fe-4S] cluster: Cys-434, Cys-440, Cys-479, and Cys-483. Siroheme is bound at residue Cys-483.

Belongs to the nitrite and sulfite reductase 4Fe-4S domain family. As to quaternary structure, alpha(8)-beta(8). The alpha component is a flavoprotein, the beta component is a hemoprotein. Requires siroheme as cofactor. It depends on [4Fe-4S] cluster as a cofactor.

The catalysed reaction is hydrogen sulfide + 3 NADP(+) + 3 H2O = sulfite + 3 NADPH + 4 H(+). It participates in sulfur metabolism; hydrogen sulfide biosynthesis; hydrogen sulfide from sulfite (NADPH route): step 1/1. In terms of biological role, component of the sulfite reductase complex that catalyzes the 6-electron reduction of sulfite to sulfide. This is one of several activities required for the biosynthesis of L-cysteine from sulfate. The polypeptide is Sulfite reductase [NADPH] hemoprotein beta-component (Shigella flexneri).